Reading from the N-terminus, the 290-residue chain is Protease HtpX homolog (290 aa).

Transmembrane regions (helical) follow at residues 5–27 (MWLR…GYLF) and 32–51 (VAFI…YWYS). Zn(2+) is bound at residue His-133. The active site involves Glu-134. His-137 lines the Zn(2+) pocket. A run of 2 helical transmembrane segments spans residues 143-163 (ILIG…AYWA) and 182-202 (IIGA…IQAA). Zn(2+) is bound at residue Glu-208.

This sequence belongs to the peptidase M48B family. The cofactor is Zn(2+).

It localises to the cell membrane. In Thermococcus kodakarensis (strain ATCC BAA-918 / JCM 12380 / KOD1) (Pyrococcus kodakaraensis (strain KOD1)), this protein is Protease HtpX homolog.